We begin with the raw amino-acid sequence, 206 residues long: Putative NAD(P)H nitroreductase MhqN (206 aa).

FMN-binding positions include 11 to 13 (RRS), 68 to 70 (QYK), 157 to 158 (IG), Arg193, and Arg196.

Belongs to the nitroreductase family. As to quaternary structure, homodimer. The cofactor is FMN.

The protein localises to the cytoplasm. Its function is as follows. Putative nitroreductase that may contribute to the degradation of aromatic compounds. This Bacillus subtilis (strain 168) protein is Putative NAD(P)H nitroreductase MhqN (mhqN).